Consider the following 312-residue polypeptide: Polyhedral envelope protein (312 aa).

The protein belongs to the baculoviridae PE family.

Its subcellular location is the virion membrane. Functionally, major component of the polyhedra envelope. This Lymantria dispar multicapsid nuclear polyhedrosis virus (LdMNPV) protein is Polyhedral envelope protein.